A 276-amino-acid chain; its full sequence is 3,4-dihydroxyphenylacetate 2,3-dioxygenase (276 aa).

Fe cation is required as a cofactor.

It catalyses the reaction 3,4-dihydroxyphenylacetate + O2 = 2-hydroxy-5-carboxymethylmuconate semialdehyde + H(+). Its pathway is aromatic compound metabolism; 4-hydroxyphenylacetate degradation; pyruvate and succinate semialdehyde from 4-hydroxyphenylacetate: step 2/7. In terms of biological role, transforms homoprotocatechuic acid (HPC) into 5-carboxymethyl-2-hydroxy-muconic semialdehyde (CHMS). This is 3,4-dihydroxyphenylacetate 2,3-dioxygenase (hpcB) from Escherichia coli.